An 80-amino-acid polypeptide reads, in one-letter code: MIKDFNESNIRNIRSSGISTKKLEDFFSINQYPNKNEIKDFANYYQCDETKIKNWFKGKRDRLKKKSSNNEKSGNKFYFK.

A DNA-binding region (homeobox) is located at residues 8–67; it reads SNIRNIRSSGISTKKLEDFFSINQYPNKNEIKDFANYYQCDETKIKNWFKGKRDRLKKKS. Residues 60 to 80 are disordered; sequence RDRLKKKSSNNEKSGNKFYFK. Low complexity predominate over residues 70–80; the sequence is NEKSGNKFYFK.

The protein resides in the nucleus. Its function is as follows. Putative transcription factor. The sequence is that of Homeobox protein 7 (hbx7) from Dictyostelium discoideum (Social amoeba).